We begin with the raw amino-acid sequence, 115 residues long: Evasin P1182 (115 aa).

Residues 1 to 26 form the signal peptide; sequence MALNWSFRVIFVSTMWCALLKFATLG. 4 cysteine pairs are disulfide-bonded: Cys-38–Cys-58, Cys-54–Cys-94, Cys-70–Cys-99, and Cys-89–Cys-108. 3 N-linked (GlcNAc...) asparagine glycosylation sites follow: Asn-45, Asn-72, and Asn-103.

The protein resides in the secreted. Functionally, salivary chemokine-binding protein which binds to host chemokines CCL2, CCL3, CCL4, CCL8 and CCL18. The protein is Evasin P1182 of Amblyomma maculatum (Gulf Coast tick).